Here is a 320-residue protein sequence, read N- to C-terminus: (+)-corvol ether B synthase/(+)-corvol ether A synthase ((2E,6E)-farnesyl diphosphate cyclizing) (320 aa).

Mg(2+)-binding residues include aspartate 78 and aspartate 83. The DDXXXD motif motif lies at 78 to 83 (DDLFVD). Arginine 171 is a substrate binding site. Positions 217, 221, and 225 each coordinate Mg(2+).

Belongs to the terpene synthase family. Mg(2+) is required as a cofactor.

The catalysed reaction is (2E,6E)-farnesyl diphosphate + H2O = (+)-corvol ether B + diphosphate. It carries out the reaction (2E,6E)-farnesyl diphosphate + H2O = (+)-corvol ether A + diphosphate. Its pathway is secondary metabolite biosynthesis; terpenoid biosynthesis. Its function is as follows. Catalyzes the conversion of (2E,6E)-farnesyl diphosphate (FPP) into (+)-corvol ether A and (+)-corvol ether B via a 1,10-cyclization, which requires isomerization of FPP to nerolidyl diphosphate (NPP) and then abstraction of the pyrophosphate from intermediate NPP leading to a (E,Z)-germacradienyl (helminthogermacradienyl) cation. The preferred substrate is (2E,6E)-farnesyl diphosphate (FPP), however geranyl diphosphate (GPP) is also able to produce small amounts of several acyclic and cyclic monoterpenes, with linalool as the main product. This Kitasatospora setae (strain ATCC 33774 / DSM 43861 / JCM 3304 / KCC A-0304 / NBRC 14216 / KM-6054) (Streptomyces setae) protein is (+)-corvol ether B synthase/(+)-corvol ether A synthase ((2E,6E)-farnesyl diphosphate cyclizing).